The primary structure comprises 371 residues: Chaperone protein DnaJ (371 aa).

Positions aspartate 5–glycine 69 constitute a J domain. A CR-type zinc finger spans residues glycine 133–arginine 215. Zn(2+) is bound by residues cysteine 146, cysteine 149, cysteine 163, cysteine 166, cysteine 189, cysteine 192, cysteine 203, and cysteine 206. 4 CXXCXGXG motif repeats span residues cysteine 146–glycine 153, cysteine 163–glycine 170, cysteine 189–glycine 196, and cysteine 203–serine 210.

The protein belongs to the DnaJ family. Homodimer. The cofactor is Zn(2+).

Its subcellular location is the cytoplasm. In terms of biological role, participates actively in the response to hyperosmotic and heat shock by preventing the aggregation of stress-denatured proteins and by disaggregating proteins, also in an autonomous, DnaK-independent fashion. Unfolded proteins bind initially to DnaJ; upon interaction with the DnaJ-bound protein, DnaK hydrolyzes its bound ATP, resulting in the formation of a stable complex. GrpE releases ADP from DnaK; ATP binding to DnaK triggers the release of the substrate protein, thus completing the reaction cycle. Several rounds of ATP-dependent interactions between DnaJ, DnaK and GrpE are required for fully efficient folding. Also involved, together with DnaK and GrpE, in the DNA replication of plasmids through activation of initiation proteins. In Bacillus cereus (strain ATCC 14579 / DSM 31 / CCUG 7414 / JCM 2152 / NBRC 15305 / NCIMB 9373 / NCTC 2599 / NRRL B-3711), this protein is Chaperone protein DnaJ.